A 307-amino-acid chain; its full sequence is UDP-3-O-acyl-N-acetylglucosamine deacetylase (307 aa).

Positions 78, 241, and 245 each coordinate Zn(2+). The Proton donor role is filled by His-268.

Belongs to the LpxC family. Zn(2+) serves as cofactor.

The catalysed reaction is a UDP-3-O-[(3R)-3-hydroxyacyl]-N-acetyl-alpha-D-glucosamine + H2O = a UDP-3-O-[(3R)-3-hydroxyacyl]-alpha-D-glucosamine + acetate. Its pathway is glycolipid biosynthesis; lipid IV(A) biosynthesis; lipid IV(A) from (3R)-3-hydroxytetradecanoyl-[acyl-carrier-protein] and UDP-N-acetyl-alpha-D-glucosamine: step 2/6. Functionally, catalyzes the hydrolysis of UDP-3-O-myristoyl-N-acetylglucosamine to form UDP-3-O-myristoylglucosamine and acetate, the committed step in lipid A biosynthesis. In Polaromonas naphthalenivorans (strain CJ2), this protein is UDP-3-O-acyl-N-acetylglucosamine deacetylase.